A 474-amino-acid chain; its full sequence is tRNA-2-methylthio-N(6)-dimethylallyladenosine synthase (474 aa).

The MTTase N-terminal domain occupies glutamine 3–glycine 120. The [4Fe-4S] cluster site is built by cysteine 12, cysteine 49, cysteine 83, cysteine 157, cysteine 161, and cysteine 164. The Radical SAM core domain maps to arginine 143 to glutamine 375. In terms of domain architecture, TRAM spans arginine 378–arginine 441.

Belongs to the methylthiotransferase family. MiaB subfamily. In terms of assembly, monomer. [4Fe-4S] cluster serves as cofactor.

The protein resides in the cytoplasm. The catalysed reaction is N(6)-dimethylallyladenosine(37) in tRNA + (sulfur carrier)-SH + AH2 + 2 S-adenosyl-L-methionine = 2-methylsulfanyl-N(6)-dimethylallyladenosine(37) in tRNA + (sulfur carrier)-H + 5'-deoxyadenosine + L-methionine + A + S-adenosyl-L-homocysteine + 2 H(+). Its function is as follows. Catalyzes the methylthiolation of N6-(dimethylallyl)adenosine (i(6)A), leading to the formation of 2-methylthio-N6-(dimethylallyl)adenosine (ms(2)i(6)A) at position 37 in tRNAs that read codons beginning with uridine. The sequence is that of tRNA-2-methylthio-N(6)-dimethylallyladenosine synthase from Haemophilus influenzae (strain PittEE).